Consider the following 297-residue polypeptide: Tyrosine recombinase XerD (297 aa).

Positions 1–86 constitute a Core-binding (CB) domain; sequence MNDLIDDFLH…SLRSFFHYLM (86 aa). A Tyr recombinase domain is found at 107–291; that stretch reads SLPKVLNLDD…TKLRLKDVYK (185 aa). Active-site residues include R147, K171, H243, R246, and H269. Catalysis depends on Y278, which acts as the O-(3'-phospho-DNA)-tyrosine intermediate.

Belongs to the 'phage' integrase family. XerD subfamily. As to quaternary structure, forms a cyclic heterotetrameric complex composed of two molecules of XerC and two molecules of XerD.

It is found in the cytoplasm. Functionally, site-specific tyrosine recombinase, which acts by catalyzing the cutting and rejoining of the recombining DNA molecules. The XerC-XerD complex is essential to convert dimers of the bacterial chromosome into monomers to permit their segregation at cell division. It also contributes to the segregational stability of plasmids. The sequence is that of Tyrosine recombinase XerD from Listeria innocua serovar 6a (strain ATCC BAA-680 / CLIP 11262).